The following is a 157-amino-acid chain: MSRRNRAPKRDILPDPKFKSQVVAKFVNHIMLDGKKSIAEKIVYGAFDKIKAKDASANEVEVFEKALDSVSPMVEVKSRRVGGATYQVPVEVRPERRQTLGMRWIIDAARKRKESTMGDRVAAEILEAIEGRGAAVKKREDTHKMAEANKAFAHFRW.

This sequence belongs to the universal ribosomal protein uS7 family. Part of the 30S ribosomal subunit. Contacts proteins S9 and S11.

Functionally, one of the primary rRNA binding proteins, it binds directly to 16S rRNA where it nucleates assembly of the head domain of the 30S subunit. Is located at the subunit interface close to the decoding center, probably blocks exit of the E-site tRNA. The sequence is that of Small ribosomal subunit protein uS7 from Francisella philomiragia subsp. philomiragia (strain ATCC 25017 / CCUG 19701 / FSC 153 / O#319-036).